Here is a 433-residue protein sequence, read N- to C-terminus: Histone acetyltransferase type B subunit 2 (433 aa).

WD repeat units follow at residues 131–171 (EHPG…LDPT), 184–224 (GHEA…ADSR), 234–274 (HHTQ…TNKA), 281–321 (GHLD…EKVH), and 325–365 (GHND…EEQL). Residues 367–371 (DDQDD) form an interaction with the histone H4 N-terminus region. A WD 6 repeat occupies 382 to 422 (GHTNHLADFSWNPNEPWLVASAAEDNLLQIWKVAESIVGKD).

It belongs to the WD repeat RBAP46/RBAP48/MSI1 family. In terms of assembly, component of the HAT-B complex composed of at least HAT1 and HAT2. The HAT-B complex binds to histone H4 tail.

It localises to the cytoplasm. Its subcellular location is the nucleus. Its function is as follows. Regulatory subunit of the histone acetylase B (HAT-B) complex. The complex acetylates 'Lys-12' of histone H4 which is required for telomeric silencing. This chain is Histone acetyltransferase type B subunit 2 (HAT2), found in Gibberella zeae (strain ATCC MYA-4620 / CBS 123657 / FGSC 9075 / NRRL 31084 / PH-1) (Wheat head blight fungus).